Here is a 66-residue protein sequence, read N- to C-terminus: DNA-directed RNA polymerase subunit Rpo10 (66 aa).

Residues C7, C10, C44, and C45 each coordinate Zn(2+).

It belongs to the archaeal Rpo10/eukaryotic RPB10 RNA polymerase subunit family. As to quaternary structure, part of the 13-subunit RNA polymerase complex. Zn(2+) serves as cofactor.

Its subcellular location is the cytoplasm. It catalyses the reaction RNA(n) + a ribonucleoside 5'-triphosphate = RNA(n+1) + diphosphate. In terms of biological role, DNA-dependent RNA polymerase (RNAP) catalyzes the transcription of DNA into RNA using the four ribonucleoside triphosphates as substrates. In Sulfolobus acidocaldarius (strain ATCC 33909 / DSM 639 / JCM 8929 / NBRC 15157 / NCIMB 11770), this protein is DNA-directed RNA polymerase subunit Rpo10.